Consider the following 149-residue polypeptide: Arginine repressor (149 aa).

This sequence belongs to the ArgR family.

It is found in the cytoplasm. Its pathway is amino-acid biosynthesis; L-arginine biosynthesis [regulation]. In terms of biological role, regulates arginine biosynthesis genes. The protein is Arginine repressor of Exiguobacterium sp. (strain ATCC BAA-1283 / AT1b).